The primary structure comprises 132 residues: Small ribosomal subunit protein uS8 (132 aa).

Belongs to the universal ribosomal protein uS8 family. As to quaternary structure, part of the 30S ribosomal subunit. Contacts proteins S5 and S12.

Its function is as follows. One of the primary rRNA binding proteins, it binds directly to 16S rRNA central domain where it helps coordinate assembly of the platform of the 30S subunit. The chain is Small ribosomal subunit protein uS8 from Borrelia duttonii (strain Ly).